Reading from the N-terminus, the 562-residue chain is Protein FAM83D-B (562 aa).

Residues 424–472 (ITTQTTETSQCTTQTPAPTSSVARLSNSSNSSSSSFSSASTTSTGSNCS) form a disordered region. Low complexity predominate over residues 425-472 (TTQTTETSQCTTQTPAPTSSVARLSNSSNSSSSSFSSASTTSTGSNCS).

The protein belongs to the FAM83 family.

The protein resides in the cytoplasm. It localises to the cytoskeleton. Its subcellular location is the spindle. The protein localises to the spindle pole. Its function is as follows. May regulate cell proliferation, growth, migration and epithelial to mesenchymal transition. May also be important for proper chromosome congression and alignment during mitosis. The protein is Protein FAM83D-B of Xenopus laevis (African clawed frog).